The sequence spans 387 residues: Lipid-A-disaccharide synthase (387 aa).

The protein belongs to the LpxB family.

The enzyme catalyses 2-N,3-O-bis[(3R)-3-hydroxytetradecanoyl]-alpha-D-glucosaminyl 1-phosphate + UDP-2-N,3-O-bis[(3R)-3-hydroxytetradecanoyl]-alpha-D-glucosamine = lipid A disaccharide (E. coli) + UDP + H(+). It catalyses the reaction a lipid X + a UDP-2-N,3-O-bis[(3R)-3-hydroxyacyl]-alpha-D-glucosamine = a lipid A disaccharide + UDP + H(+). Its pathway is glycolipid biosynthesis; lipid IV(A) biosynthesis; lipid IV(A) from (3R)-3-hydroxytetradecanoyl-[acyl-carrier-protein] and UDP-N-acetyl-alpha-D-glucosamine: step 5/6. Condensation of UDP-2,3-diacylglucosamine and 2,3-diacylglucosamine-1-phosphate to form lipid A disaccharide, a precursor of lipid A, a phosphorylated glycolipid that anchors the lipopolysaccharide to the outer membrane of the cell. This Blochmanniella pennsylvanica (strain BPEN) protein is Lipid-A-disaccharide synthase.